Here is a 359-residue protein sequence, read N- to C-terminus: Serpentine receptor class epsilon-13 (359 aa).

The next 7 helical transmembrane spans lie at 33–53 (YLFV…YYLL), 74–94 (AIYL…ILLI), 111–131 (ISLF…AFVA), 150–170 (WLVG…ALDF), 180–200 (VTIF…NFLL), 237–257 (LALS…IDNL), and 266–286 (LNTV…PFVI).

It belongs to the nematode receptor-like protein sre family.

It is found in the membrane. The sequence is that of Serpentine receptor class epsilon-13 (sre-13) from Caenorhabditis elegans.